The sequence spans 311 residues: Triacylglycerol lipase (311 aa).

The N-terminal stretch at 1–26 is a signal peptide; that stretch reads MKKKSLLPLGLAIGLASLAASPLIQA. The AB hydrolase-1 domain maps to 35–280; that stretch reads PIVLAHGMLG…DNYRMNHLDE (246 aa). Residue Met-42 coordinates substrate. Ser-108 functions as the Nucleophile in the catalytic mechanism. His-109 contributes to the substrate binding site. Cys-209 and Cys-261 are disulfide-bonded. Residue Asp-235 participates in Ca(2+) binding. Catalysis depends on charge relay system residues Asp-255 and His-277. Ca(2+) is bound by residues Asp-279, Gln-283, and Leu-287.

This sequence belongs to the AB hydrolase superfamily. Pseudomonas lipase family. Monomer. Ca(2+) is required as a cofactor.

The protein localises to the secreted. It carries out the reaction a triacylglycerol + H2O = a diacylglycerol + a fatty acid + H(+). Catalyzes the hydrolysis of triacylglycerol. Also able to catalyze, in anhydrous organic solvents, intramolecular transesterification of omega-hydroxyfatty acid esters to form macrocyclic lactones. This biosynthesis is dependent on the chain length of the substrates, and the formation of monomer lactone is maximum with methyl 18-hydroxyoctadecanoate. With shorter substrates, monomer lactone decreases and the formation of diolide (dimer lactone) increases. This is Triacylglycerol lipase from Pseudomonas sp. (strain 109).